The following is a 100-amino-acid chain: uncharacterized protein (100 aa).

This is an uncharacterized protein from Schizosaccharomyces pombe (strain 972 / ATCC 24843) (Fission yeast).